Reading from the N-terminus, the 24-residue chain is Protein YahV (24 aa).

A helical membrane pass occupies residues 4–24; sequence ILLNVLNIVFIGIAIILVIIC.

It localises to the cell inner membrane. This chain is Protein YahV, found in Escherichia coli (strain K12).